A 152-amino-acid polypeptide reads, in one-letter code: Ribosome maturation factor RimP (152 aa).

The protein belongs to the RimP family.

It localises to the cytoplasm. Its function is as follows. Required for maturation of 30S ribosomal subunits. The protein is Ribosome maturation factor RimP of Pseudomonas aeruginosa (strain LESB58).